A 729-amino-acid polypeptide reads, in one-letter code: Rho GTPase-activating protein 28 (729 aa).

Disordered regions lie at residues 20-42 (AQPP…LSRK) and 55-105 (SNES…AEVT). Residues 65-75 (SRSNSEASVDS) are compositionally biased toward polar residues. Residue Ser-72 is modified to Phosphoserine. Residues 80–89 (DFWREIESIK) are compositionally biased toward basic and acidic residues. Thr-159 bears the Phosphothreonine mark. Residues 176–236 (GVSESPPRDT…SQDKEGSFAV (61 aa)) form a disordered region. The segment covering 195 to 204 (GTKEERELPR) has biased composition (basic and acidic residues). The segment covering 217-226 (SLNSTTLSDA) has biased composition (polar residues). The 198-residue stretch at 380 to 577 (VPLTVLLDGD…LMLKYQKILW (198 aa)) folds into the Rho-GAP domain. Positions 612–631 (TLERETASPKTSKVLQKSPS) are disordered. Residues 619–630 (SPKTSKVLQKSP) are compositionally biased toward polar residues.

In terms of tissue distribution, expressed in testis. Expressed at moderate level in kidney and ovary, and weakly expressed in spleen and skeletal muscle.

Functionally, GTPase activator for the Rho-type GTPases by converting them to an inactive GDP-bound state. In Homo sapiens (Human), this protein is Rho GTPase-activating protein 28 (ARHGAP28).